The chain runs to 575 residues: SH2B adapter protein 3 (575 aa).

Disordered regions lie at residues 1 to 23 (MNGPALQPSSPSSAPSASPAAAP), 83 to 136 (RAPG…CSFQ), and 150 to 176 (SAGELPAAHTAAAPGTPGEAAETPARP). Phosphoserine is present on Ser13. Residues 83-93 (RAPGRDYRDTG) show a composition bias toward basic and acidic residues. Residues 95-104 (GPPAKAEASP) are compositionally biased toward low complexity. Ser103, Ser120, and Ser150 each carry phosphoserine. Low complexity predominate over residues 152–174 (GELPAAHTAAAPGTPGEAAETPA). A PH domain is found at 194-307 (EALKEAVLRY…WMAELSECTG (114 aa)). A disordered region spans residues 322-346 (ALEPSTSSSPRGSTDSLNQGASPGG). The segment covering 325 to 337 (PSTSSSPRGSTDS) has biased composition (low complexity). Residue Ser330 is modified to Phosphoserine. Residues 364–462 (WFHGPISRVK…ACDVRLSSYV (99 aa)) enclose the SH2 domain. Disordered stretches follow at residues 503–525 (SSGCPRGLSPEGLPGRSSPPEQI) and 546–575 (PVNRARDSDYEMDSSSRSHLRAIDNQYTPL).

This sequence belongs to the SH2B adapter family. Binds to the tyrosine-phosphorylated TCR zeta chain via its SH2 domain. Post-translationally, tyrosine phosphorylated by LCK. Preferentially expressed by lymphoid cell lines.

In terms of biological role, links T-cell receptor activation signal to phospholipase C-gamma-1, GRB2 and phosphatidylinositol 3-kinase. The sequence is that of SH2B adapter protein 3 (SH2B3) from Homo sapiens (Human).